Reading from the N-terminus, the 157-residue chain is uncharacterized protein (157 aa).

The N-acetyltransferase domain occupies 9 to 146 (LLINYKTLDE…GDFYVWHPET (138 aa)).

This is an uncharacterized protein from Bacillus cereus (strain AH187).